Here is a 543-residue protein sequence, read N- to C-terminus: Terpineol synthase, chloroplastic (543 aa).

A disordered region spans residues 1-22; it reads MNTEPSPNHYSAISSSDQNLTR. Residues R263, D300, D304, R435, and N438 each coordinate (2E)-geranyl diphosphate. The Mg(2+) site is built by D300 and D304. A DDXXD motif motif is present at residues 300–304; it reads DDVYD. Positions 438, 442, and 446 each coordinate Mg(2+).

It belongs to the terpene synthase family. Tpsb subfamily. As to quaternary structure, monomer. Mg(2+) is required as a cofactor. Requires Mn(2+) as cofactor. In terms of tissue distribution, confined to flowers.

The protein resides in the plastid. The protein localises to the chloroplast. The enzyme catalyses (2E)-geranyl diphosphate + H2O = (S)-alpha-terpineol + diphosphate. The catalysed reaction is (2E)-geranyl diphosphate = sabinene + diphosphate. It catalyses the reaction (2E)-geranyl diphosphate = beta-myrcene + diphosphate. It carries out the reaction (2E)-geranyl diphosphate = limonene + diphosphate. The enzyme catalyses (2E)-geranyl diphosphate + H2O = 1,8-cineole + diphosphate. The protein operates within secondary metabolite biosynthesis; terpenoid biosynthesis. Functionally, monoterpene synthase (TPS) involved in the biosynthesis of monoterpene natural products of the 'cineole cassette', volatile compounds present in floral scent. Catalyzes the conversion of (2E)-geranyl diphosphate (GPP) into alpha-terpineol and, as minor products, sabinene, beta-myrcene, limonene and 1,8-cineole. This chain is Terpineol synthase, chloroplastic, found in Nicotiana alata (Winged tobacco).